Consider the following 679-residue polypeptide: Stress-70 protein, mitochondrial (679 aa).

The transit peptide at 1–46 directs the protein to the mitochondrion; sequence MISATRAAAARLVGTAASRTPAAARHQDGWNGLSHEAFRFVSRRDY. Positions 1 to 432 are interaction with NFS1; that stretch reads MISATRAAAA…IQGGVLAGDV (432 aa). Residues Thr63 and Asn64 each coordinate ADP. Residues 63–431 form a nucleotide-binding domain (NBD) region; sequence TNSCVAVMEG…AIQGGVLAGD (369 aa). An N6-acetyllysine modification is found at Lys76. At Thr87 the chain carries Phosphothreonine. Residues Lys135 and Lys138 each carry the N6-acetyllysine; alternate modification. Residues Lys135 and Lys138 each carry the N6-succinyllysine; alternate modification. Lys143 carries the post-translational modification N6-acetyllysine. The residue at position 206 (Lys206) is an N6-acetyllysine; alternate. Lys206 bears the N6-succinyllysine; alternate mark. Lys206 bears the N6-malonyllysine; alternate mark. N6-acetyllysine is present on residues Lys234 and Lys288. Lys300 carries the post-translational modification N6-acetyllysine; alternate. Residue Lys300 is modified to N6-succinyllysine; alternate. 3 residues coordinate ADP: Glu313, Lys316, and Ser320. Lys360 is subject to N6-acetyllysine; alternate. Position 360 is an N6-succinyllysine; alternate (Lys360). The residue at position 368 (Lys368) is an N6-succinyllysine. ADP contacts are provided by Gly388 and Arg391. At Lys394 the chain carries N6-succinyllysine. Ser408 is subject to Phosphoserine. Residues 432 to 441 form an interdomain linker region; it reads VTDVLLLDVT. The segment at 432–679 is interaction with FXN and ISCU; the sequence is VTDVLLLDVT…QKEDQKEEKQ (248 aa). The substrate-binding domain (SBD) stretch occupies residues 442–679; it reads PLSLGIETLG…QKEDQKEEKQ (238 aa). Position 513 is an omega-N-methylarginine (Arg513). N6-acetyllysine; alternate is present on residues Lys567 and Lys600. 2 positions are modified to N6-succinyllysine; alternate: Lys567 and Lys600. N6-succinyllysine is present on Lys610. Lys612 carries the post-translational modification N6-acetyllysine. Lys646 bears the N6-acetyllysine; alternate mark. Position 646 is an N6-succinyllysine; alternate (Lys646). Positions 656–679 are disordered; sequence ASEREGSGSSGTGEQKEDQKEEKQ. Over residues 669-679 the composition is skewed to basic and acidic residues; sequence EQKEDQKEEKQ.

Belongs to the heat shock protein 70 family. As to quaternary structure, interacts strongly with the intermediate form of FXN and weakly with its mature form. Interacts with HSCB. Associates with the mitochondrial contact site and cristae organizing system (MICOS) complex, composed of at least MICOS10/MIC10, CHCHD3/MIC19, CHCHD6/MIC25, APOOL/MIC27, IMMT/MIC60, APOO/MIC23/MIC26 and QIL1/MIC13. This complex was also known under the names MINOS or MitOS complex. The MICOS complex associates with mitochondrial outer membrane proteins SAMM50, MTX1, MTX2 and DNAJC11, mitochondrial inner membrane protein TMEM11 and with HSPA9. Interacts with DNLZ, the interaction is required to prevent self-aggregation. Interacts with TESPA1. Interacts with PDPN. Interacts with NFU1, NFS1 and ISCU. Interacts with TP53; the interaction promotes TP53 degradation. Interacts (via SBD domain) with UBXN2A; the interaction with UBXN2A inhibits HSPA9/MOT-2 interaction with and degradation of TP53, thereby promotes TP53 translocation to the nucleus. Interacts with ITPR1 AND VDAC1; this interaction couples ITPR1 to VDAC1. Component of the TIM23 mitochondrial inner membrane pre-sequence translocase complex.

It is found in the mitochondrion. The protein resides in the nucleus. Its subcellular location is the nucleolus. The protein localises to the cytoplasm. It localises to the mitochondrion matrix. The catalysed reaction is ATP + H2O = ADP + phosphate + H(+). With respect to regulation, the chaperone activity is regulated by ATP-induced allosteric coupling of the nucleotide-binding (NBD) and substrate-binding (SBD) domains. ATP binding in the NBD leads to a conformational change in the NBD, which is transferred through the interdomain linker (IDL) to the substrate-binding domain (SBD). This elicits a reduced substrate affinity and a faster substrate exchange rate. Upon hydrolysis of ATP to ADP, the protein undergoes a conformational change that increases its affinity for substrate proteins. It cycles through repeated phases of ATP hydrolysis and nucleotide exchange, facilitating repeated cycles of substrate binding and release. Functions in collaboration with co-chaperones. Functions with the co-chaperone, DNLZ, to maintain solubility and regulate ATP hydrolysis. Nucleotide exchange factors, GRPEL1 and GRPEL2, accelerate nucleotide exchange. Its function is as follows. Mitochondrial chaperone that plays a key role in mitochondrial protein import, folding, and assembly. Plays an essential role in the protein quality control system, the correct folding of proteins, the re-folding of misfolded proteins, and the targeting of proteins for subsequent degradation. These processes are achieved through cycles of ATP binding, ATP hydrolysis, and ADP release, mediated by co-chaperones. In mitochondria, it associates with the TIM (translocase of the inner membrane) protein complex to assist in the import and folding of mitochondrial proteins. Plays an important role in mitochondrial iron-sulfur cluster (ISC) biogenesis, interacts with and stabilizes ISC cluster assembly proteins FXN, NFU1, NFS1 and ISCU. Regulates erythropoiesis via stabilization of ISC assembly. Regulates mitochondrial calcium-dependent apoptosis by coupling two calcium channels, ITPR1 and VDAC1, at the mitochondria-associated endoplasmic reticulum (ER) membrane to facilitate calcium transport from the ER lumen to the mitochondria intermembrane space, providing calcium for the downstream calcium channel MCU, which releases it into the mitochondrial matrix. Although primarily located in the mitochondria, it is also found in other cellular compartments. In the cytosol, it associates with proteins involved in signaling, apoptosis, or senescence. It may play a role in cell cycle regulation via its interaction with and promotion of degradation of TP53. May play a role in the control of cell proliferation and cellular aging. Protects against reactive oxygen species (ROS). Extracellular HSPA9 plays a cytoprotective role by preventing cell lysis following immune attack by the membrane attack complex by disrupting formation of the complex. This is Stress-70 protein, mitochondrial from Cricetulus griseus (Chinese hamster).